The sequence spans 1036 residues: Zinc finger protein 532 (1036 aa).

Disordered regions lie at residues Pro26 to Gly92, Gly106 to Ser206, Arg220 to Lys265, and Ala281 to Ile362. A compositionally biased stretch (basic and acidic residues) spans Ser32–His52. Phosphoserine occurs at positions 130, 133, and 134. The segment covering Glu136–Asp151 has biased composition (acidic residues). N6-acetyllysine is present on Lys175. Over residues Glu182–Gly193 the composition is skewed to polar residues. Basic and acidic residues-rich tracts occupy residues His194–Glu205 and Arg220–Asp249. Residues Ala253–Lys265 show a composition bias toward low complexity. Residues Glu302–Pro314 are compositionally biased toward basic and acidic residues. Phosphoserine is present on residues Ser306 and Ser313. The segment covering Ser336–Ser353 has biased composition (low complexity). Ser433 carries the post-translational modification Phosphoserine. Residues Lys458 and Lys515 each participate in a glycyl lysine isopeptide (Lys-Gly) (interchain with G-Cter in SUMO2) cross-link. Residues Tyr615–Tyr634 form a C2H2-type 1; degenerate zinc finger. The C2H2-type 2; degenerate zinc-finger motif lies at Leu751 to Asp775. A C2H2-type 3 zinc finger spans residues His784–His807. The C2H2-type 4; degenerate zinc finger occupies Tyr814–His840. The disordered stretch occupies residues Val847–Lys877. The segment covering Asp852–Ile867 has biased composition (acidic residues). Over residues Lys868–Lys877 the composition is skewed to basic and acidic residues. At Ser875 the chain carries Phosphoserine. Glycyl lysine isopeptide (Lys-Gly) (interchain with G-Cter in SUMO2) cross-links involve residues Lys879 and Lys902. 2 consecutive C2H2-type zinc fingers follow at residues His938–His961 and Arg999–His1021. The interval Pro966–Lys1000 is disordered.

Belongs to the krueppel C2H2-type zinc-finger protein family.

The protein localises to the nucleus. Its function is as follows. May be involved in transcriptional regulation. This Mus musculus (Mouse) protein is Zinc finger protein 532 (Znf532).